A 155-amino-acid polypeptide reads, in one-letter code: Small ribosomal subunit protein uS7 (155 aa).

The protein belongs to the universal ribosomal protein uS7 family. In terms of assembly, part of the 30S ribosomal subunit. Contacts proteins S9 and S11.

Its function is as follows. One of the primary rRNA binding proteins, it binds directly to 16S rRNA where it nucleates assembly of the head domain of the 30S subunit. Is located at the subunit interface close to the decoding center, probably blocks exit of the E-site tRNA. This chain is Small ribosomal subunit protein uS7, found in Helicobacter acinonychis (strain Sheeba).